We begin with the raw amino-acid sequence, 339 residues long: DNA-directed RNA polymerase subunit alpha (339 aa).

The segment at 1–235 (MVLQKNWQSL…DQLQLFINFD (235 aa)) is alpha N-terminal domain (alpha-NTD). The segment at 251–339 (FNRNLLRKVD…DLAKRLDEPF (89 aa)) is alpha C-terminal domain (alpha-CTD).

This sequence belongs to the RNA polymerase alpha chain family. In terms of assembly, homodimer. The RNAP catalytic core consists of 2 alpha, 1 beta, 1 beta' and 1 omega subunit. When a sigma factor is associated with the core the holoenzyme is formed, which can initiate transcription.

The catalysed reaction is RNA(n) + a ribonucleoside 5'-triphosphate = RNA(n+1) + diphosphate. Its function is as follows. DNA-dependent RNA polymerase catalyzes the transcription of DNA into RNA using the four ribonucleoside triphosphates as substrates. The sequence is that of DNA-directed RNA polymerase subunit alpha from Gluconacetobacter diazotrophicus (strain ATCC 49037 / DSM 5601 / CCUG 37298 / CIP 103539 / LMG 7603 / PAl5).